The following is a 118-amino-acid chain: UPF0295 protein BC_0520 (118 aa).

The next 2 membrane-spanning stretches (helical) occupy residues 12-32 and 43-63; these read IRTF…LGVF and FMMV…WIGM.

The protein belongs to the UPF0295 family.

The protein localises to the cell membrane. The chain is UPF0295 protein BC_0520 from Bacillus cereus (strain ATCC 14579 / DSM 31 / CCUG 7414 / JCM 2152 / NBRC 15305 / NCIMB 9373 / NCTC 2599 / NRRL B-3711).